Reading from the N-terminus, the 308-residue chain is MKIIYAGTPDFAVPALRALIQSSHEVSLVLTQPDRPAGRGLKLKPSPVKSLALEHGIPLLQPETLKDEAVQARIAAEHADALVVAAYGLIIPATVLSMPRYGCYNIHASLLPRWRGAAPIQRALLAGDKETGVTIMEVVPALDAGAMILRGTLPITEHDTAQTLHDGLAEIGAELMLQAMDKLEREGRLEAEPQDESLVTYAQKLQKAEAVIDWRKNADELSRQVRAFNPFPVAHSTLKGETCRIWMAQAVSGTAEPGMIASVDNGILVGCGRGLLRIDELQLPGGKRLQAKDFLAGNPLCPGDRFGS.

Residue 109 to 112 (SLLP) participates in (6S)-5,6,7,8-tetrahydrofolate binding.

This sequence belongs to the Fmt family.

It catalyses the reaction L-methionyl-tRNA(fMet) + (6R)-10-formyltetrahydrofolate = N-formyl-L-methionyl-tRNA(fMet) + (6S)-5,6,7,8-tetrahydrofolate + H(+). In terms of biological role, attaches a formyl group to the free amino group of methionyl-tRNA(fMet). The formyl group appears to play a dual role in the initiator identity of N-formylmethionyl-tRNA by promoting its recognition by IF2 and preventing the misappropriation of this tRNA by the elongation apparatus. The protein is Methionyl-tRNA formyltransferase of Methylobacillus flagellatus (strain ATCC 51484 / DSM 6875 / VKM B-1610 / KT).